Consider the following 351-residue polypeptide: uncharacterized protein (351 aa).

Residues 14 to 69 form the HTH lacI-type domain; that stretch reads PRLADIAAQAQVSEATASRVLNGRPASRXSTRQRVLAALDLLGYERPTRLRRRSAG. Positions 16 to 35 form a DNA-binding region, H-T-H motif; it reads LADIAAQAQVSEATASRVLN.

Functionally, putative sugar-binding regulatory protein for the alpha-amylase gene. This is an uncharacterized protein from Streptomyces limosus (Streptomyces albidoflavus).